The following is a 409-amino-acid chain: Broad specificity amino-acid racemase (409 aa).

Positions 1–24 (MPFRRTLLAASLALLITGQAPLYA) are cleaved as a signal peptide. A disulfide bridge links C71 with C97. K75 acts as the Proton acceptor in catalysis. Position 75 is an N6-(pyridoxal phosphate)lysine (K75). A substrate-binding site is contributed by R174. Residue Y301 is the Proton acceptor of the active site. Residue M349 coordinates substrate.

This sequence belongs to the alanine racemase family. Bsr subfamily. Requires pyridoxal 5'-phosphate as cofactor.

The protein resides in the periplasm. The catalysed reaction is an L-alpha-amino acid = a D-alpha-amino acid. It catalyses the reaction L-lysine = D-lysine. It carries out the reaction L-arginine = D-arginine. The enzyme catalyses L-glutamine = D-glutamine. In terms of biological role, amino-acid racemase able to utilize a broad range of substrates. Reversibly racemizes 9 of the 19 natural chiral amino acids known, including both positively charged amino acids (Lys, Arg and His) and non-beta-branched aliphatic amino acids (Ala, Leu, Met, Ser, Gln and Asn). Among these amino acids, activity is the highest with lysine and arginine, and poor or very poor with the others. Plays a primary role in the catabolism of basic amino acid, that allows P.putida strain KT2440 to grow on L-Lys and L-Arg as the sole source of carbon and nitrogen, through conversion to their respective D-enantiomers. The protein is Broad specificity amino-acid racemase of Pseudomonas putida (strain ATCC 47054 / DSM 6125 / CFBP 8728 / NCIMB 11950 / KT2440).